The following is a 498-amino-acid chain: MTQPTITQDTARQPNPNITLYDTMQRQKVPFVPGTPGYVGMYLCGPTVYSDAHLGHAKKEVAFDVIRRALTHFGYQVRYVSNITDVGHLLNDADEGEDKLQARARLEQLEPMEVADKYFWSFFRDMDALNVLRPSINPRATGHIQEQIKLIEELIEKGHAYESAGSVYFDVRSWPEYGKLSGRKLDDQEEGTREAVRDEKRDPRDFALWKKAEPEHLMRWDSPWSVGFPGWHIECSAMSLKYLGEGFDIHGGGLDLQFPHHEAEIAQAEAAGHHFARYWMHNNMLTIGGEKMSKSKGNFTTIQDILKKYDPMVVRFLLVSSHYRSVTEMNEEAFASAANGYRRLSETLHEIERRLKDAPAGSDTALDSKIAARVTEFEDAMRDDFNTPKAVASLFGLTGELNTALNAGPVGRDTLERARDAYRSLGGDVLGLFAETGSAASVAQDDASVIDALMDLVLKARQNYRLQKQYAEADELRETLGKAGITVEDTKDGARWKR.

C44 is a binding site for Zn(2+). The 'HIGH' region signature appears at 46–56; it reads PTVYSDAHLGH. 3 residues coordinate Zn(2+): C235, H260, and E264. The 'KMSKS' region signature appears at 291-295; it reads KMSKS. K294 serves as a coordination point for ATP.

Belongs to the class-I aminoacyl-tRNA synthetase family. Monomer. Zn(2+) serves as cofactor.

The protein resides in the cytoplasm. The catalysed reaction is tRNA(Cys) + L-cysteine + ATP = L-cysteinyl-tRNA(Cys) + AMP + diphosphate. The sequence is that of Cysteine--tRNA ligase (cysS) from Deinococcus radiodurans (strain ATCC 13939 / DSM 20539 / JCM 16871 / CCUG 27074 / LMG 4051 / NBRC 15346 / NCIMB 9279 / VKM B-1422 / R1).